Here is a 115-residue protein sequence, read N- to C-terminus: U3-lycotoxin-Ls1h (115 aa).

A signal peptide spans 1-20; the sequence is MKFVLLFGVFLVTLFSYSSA. Positions 21 to 44 are excised as a propeptide; it reads EMLDDFDQADEDELLSLIEKEEAR. 4 cysteine pairs are disulfide-bonded: C48-C63, C55-C72, C62-C87, and C74-C85.

This sequence belongs to the neurotoxin 19 (CSTX) family. 01 subfamily. As to expression, expressed by the venom gland.

It localises to the secreted. This Lycosa singoriensis (Wolf spider) protein is U3-lycotoxin-Ls1h.